The chain runs to 1175 residues: 1-phosphatidylinositol 4,5-bisphosphate phosphodiesterase beta-4 (1175 aa).

At alanine 2 the chain carries N-acetylalanine. The PI-PLC X-box domain occupies glutamine 313 to lysine 463. Active-site residues include histidine 328 and histidine 375. A disordered region spans residues alanine 487–proline 512. Acidic residues predominate over residues leucine 493–glutamate 508. A PI-PLC Y-box domain is found at leucine 565 to arginine 681. The region spanning aspartate 684–leucine 809 is the C2 domain. Disordered stretches follow at residues serine 860–glycine 904 and lysine 1082–leucine 1110. Composition is skewed to polar residues over residues valine 885–alanine 900 and methionine 1085–aspartate 1094. The residue at position 886 (threonine 886) is a Phosphothreonine. A compositionally biased stretch (basic and acidic residues) spans lysine 1095 to glutamate 1109.

The cofactor is Ca(2+). In terms of tissue distribution, preferentially expressed in the retina.

The protein localises to the cell membrane. It catalyses the reaction a 1,2-diacyl-sn-glycero-3-phospho-(1D-myo-inositol-4,5-bisphosphate) + H2O = 1D-myo-inositol 1,4,5-trisphosphate + a 1,2-diacyl-sn-glycerol + H(+). The enzyme catalyses a 1,2-diacyl-sn-glycero-3-phospho-(1D-myo-inositol) + H2O = 1D-myo-inositol 1-phosphate + a 1,2-diacyl-sn-glycerol + H(+). Functionally, activated phosphatidylinositol-specific phospholipase C enzymes catalyze the production of the second messenger molecules diacylglycerol (DAG) and inositol 1,4,5-trisphosphate (IP3) involved in G-protein coupled receptor signaling pathways. PLCB4 is a direct effector of the endothelin receptor signaling pathway that plays an essential role in lower jaw and middle ear structures development. In Rattus norvegicus (Rat), this protein is 1-phosphatidylinositol 4,5-bisphosphate phosphodiesterase beta-4.